Reading from the N-terminus, the 521-residue chain is Glutamate--tRNA ligase (521 aa).

The 'HIGH' region motif lies at 30–40 (PSPTGYLHVGG). The short motif at 277–281 (KLSKR) is the 'KMSKS' region element. K280 lines the ATP pocket.

Belongs to the class-I aminoacyl-tRNA synthetase family. Glutamate--tRNA ligase type 1 subfamily. Monomer.

The protein resides in the cytoplasm. The catalysed reaction is tRNA(Glu) + L-glutamate + ATP = L-glutamyl-tRNA(Glu) + AMP + diphosphate. Functionally, catalyzes the attachment of glutamate to tRNA(Glu) in a two-step reaction: glutamate is first activated by ATP to form Glu-AMP and then transferred to the acceptor end of tRNA(Glu). This Chlorobium phaeovibrioides (strain DSM 265 / 1930) (Prosthecochloris vibrioformis (strain DSM 265)) protein is Glutamate--tRNA ligase.